We begin with the raw amino-acid sequence, 378 residues long: Alkanesulfonate monooxygenase (378 aa).

The protein belongs to the SsuD family.

The enzyme catalyses an alkanesulfonate + FMNH2 + O2 = an aldehyde + FMN + sulfite + H2O + 2 H(+). Its function is as follows. Catalyzes the desulfonation of aliphatic sulfonates. This Bacillus velezensis (strain DSM 23117 / BGSC 10A6 / LMG 26770 / FZB42) (Bacillus amyloliquefaciens subsp. plantarum) protein is Alkanesulfonate monooxygenase.